The chain runs to 203 residues: Protein GrpE (203 aa).

Basic and acidic residues predominate over residues 1–20 (MSSKEQNVHEEQVSKEKEGM). The segment at 1 to 38 (MSSKEQNVHEEQVSKEKEGMESVMNESQEQVKSEDAQA) is disordered.

It belongs to the GrpE family. In terms of assembly, homodimer.

The protein resides in the cytoplasm. Functionally, participates actively in the response to hyperosmotic and heat shock by preventing the aggregation of stress-denatured proteins, in association with DnaK and GrpE. It is the nucleotide exchange factor for DnaK and may function as a thermosensor. Unfolded proteins bind initially to DnaJ; upon interaction with the DnaJ-bound protein, DnaK hydrolyzes its bound ATP, resulting in the formation of a stable complex. GrpE releases ADP from DnaK; ATP binding to DnaK triggers the release of the substrate protein, thus completing the reaction cycle. Several rounds of ATP-dependent interactions between DnaJ, DnaK and GrpE are required for fully efficient folding. In Proteus mirabilis (strain HI4320), this protein is Protein GrpE.